The following is a 176-amino-acid chain: ATP synthase subunit b, chloroplastic (176 aa).

A helical membrane pass occupies residues 19 to 39 (LDLLETNIINIFILIIILIYL).

The protein belongs to the ATPase B chain family. F-type ATPases have 2 components, F(1) - the catalytic core - and F(0) - the membrane proton channel. F(1) has five subunits: alpha(3), beta(3), gamma(1), delta(1), epsilon(1). F(0) has four main subunits: a(1), b(1), b'(1) and c(10-14). The alpha and beta chains form an alternating ring which encloses part of the gamma chain. F(1) is attached to F(0) by a central stalk formed by the gamma and epsilon chains, while a peripheral stalk is formed by the delta, b and b' chains.

It is found in the plastid. The protein localises to the chloroplast thylakoid membrane. Functionally, f(1)F(0) ATP synthase produces ATP from ADP in the presence of a proton or sodium gradient. F-type ATPases consist of two structural domains, F(1) containing the extramembraneous catalytic core and F(0) containing the membrane proton channel, linked together by a central stalk and a peripheral stalk. During catalysis, ATP synthesis in the catalytic domain of F(1) is coupled via a rotary mechanism of the central stalk subunits to proton translocation. In terms of biological role, component of the F(0) channel, it forms part of the peripheral stalk, linking F(1) to F(0). This Galdieria sulphuraria (Red alga) protein is ATP synthase subunit b, chloroplastic.